The sequence spans 216 residues: ATP-dependent Clp protease proteolytic subunit (216 aa).

The active-site Nucleophile is serine 101. Histidine 126 is a catalytic residue.

This sequence belongs to the peptidase S14 family. Component of the chloroplastic Clp protease core complex.

Its subcellular location is the plastid. The protein localises to the chloroplast stroma. The enzyme catalyses Hydrolysis of proteins to small peptides in the presence of ATP and magnesium. alpha-casein is the usual test substrate. In the absence of ATP, only oligopeptides shorter than five residues are hydrolyzed (such as succinyl-Leu-Tyr-|-NHMec, and Leu-Tyr-Leu-|-Tyr-Trp, in which cleavage of the -Tyr-|-Leu- and -Tyr-|-Trp bonds also occurs).. Cleaves peptides in various proteins in a process that requires ATP hydrolysis. Has a chymotrypsin-like activity. Plays a major role in the degradation of misfolded proteins. This is ATP-dependent Clp protease proteolytic subunit from Saccharum hybrid (Sugarcane).